The sequence spans 508 residues: Catalase (508 aa).

Residues 1-21 form the signal peptide; the sequence is MHMSKSFLLISMGLASISVHA. Active-site residues include His-72 and Asn-145. Tyr-353 provides a ligand contact to heme. Residues 373 to 392 show a composition bias toward polar residues; sequence PKSPVANHNQDGPSNNSTGL. Positions 373–396 are disordered; that stretch reads PKSPVANHNQDGPSNNSTGLGNVD.

The protein belongs to the catalase family. It depends on heme as a cofactor.

The protein resides in the periplasm. The catalysed reaction is 2 H2O2 = O2 + 2 H2O. Functionally, decomposes hydrogen peroxide into water and oxygen; serves to protect cells from the toxic effects of hydrogen peroxide. The protein is Catalase of Vibrio vulnificus (strain CMCP6).